A 314-amino-acid chain; its full sequence is Melanocyte-stimulating hormone receptor (314 aa).

The Extracellular portion of the chain corresponds to 1-35 (MSMLAPLRLVREPWNASEGNQSNATAGAGGAWCQG). Asn-15, Asn-20, and Asn-23 each carry an N-linked (GlcNAc...) asparagine glycan. A helical membrane pass occupies residues 36-61 (LDIPNELFLTLGLVSLVENLLVVAAI). The Cytoplasmic portion of the chain corresponds to 62-70 (LKNRNLHSP). Residues 71–91 (TYYFICCLAVSDMLVSVSNLA) traverse the membrane as a helical segment. Residues 92–116 (KTLFMLLMEHGVLVIRASIVRHMDN) lie on the Extracellular side of the membrane. The chain crosses the membrane as a helical span at residues 117–138 (VIDMLICSSVVSSLSFLGVIAV). Residues 139–161 (DRYITIFYALRYHSIMTLQRAVV) lie on the Cytoplasmic side of the membrane. Residues 162–181 (TMASVWLASTVSSTVLITYY) form a helical membrane-spanning segment. Topologically, residues 182–189 (RNNAILLC) are extracellular. A helical transmembrane segment spans residues 190–209 (LIGFFLFMLVLMLVLYIHMF). Over 210–237 (ALACHHVRSISSQQKQPTIYRTSSLKGA) the chain is Cytoplasmic. The helical transmembrane segment at 238–263 (VTLTILLGVFFICWGPFFFHLILIVT) threads the bilayer. Residues 264-276 (CPTNPFCTCFFSY) lie on the Extracellular side of the membrane. The chain crosses the membrane as a helical span at residues 277–297 (FNLFLILIICNSVVDPLIYAF). Topologically, residues 298–314 (RSQELRRTLREVVLCSW) are cytoplasmic. Cys-312 is lipidated: S-palmitoyl cysteine.

It belongs to the G-protein coupled receptor 1 family.

The protein localises to the cell membrane. Functionally, receptor for MSH (alpha, beta and gamma) and ACTH. The activity of this receptor is mediated by G proteins which activate adenylate cyclase. Mediates melanogenesis via regulation of cAMP signaling in melanocytes. This chain is Melanocyte-stimulating hormone receptor (MC1R), found in Gallus gallus (Chicken).